A 526-amino-acid polypeptide reads, in one-letter code: Lysine--tRNA ligase (526 aa).

E431 and E438 together coordinate Mg(2+).

The protein belongs to the class-II aminoacyl-tRNA synthetase family. In terms of assembly, homodimer. It depends on Mg(2+) as a cofactor.

Its subcellular location is the cytoplasm. The catalysed reaction is tRNA(Lys) + L-lysine + ATP = L-lysyl-tRNA(Lys) + AMP + diphosphate. The sequence is that of Lysine--tRNA ligase from Chlamydia felis (strain Fe/C-56) (Chlamydophila felis).